Reading from the N-terminus, the 521-residue chain is Protein DETOXIFICATION 44, chloroplastic (521 aa).

The N-terminal 31 residues, Met1 to Val31, are a transit peptide targeting the chloroplast. The interval Pro12–Ile73 is disordered. 2 stretches are compositionally biased toward polar residues: residues Arg18 to Arg27 and Ala42 to Asn61. 12 helical membrane passes run Ile80 to Val100, Ala103 to Phe123, Val167 to Leu187, Arg213 to Phe235, Leu242 to Val262, Ser268 to Lys288, Leu314 to Ala334, Gln345 to Ala365, Leu385 to Ile405, Ile423 to Val443, Phe454 to Val474, and Leu481 to Leu503.

Belongs to the multi antimicrobial extrusion (MATE) (TC 2.A.66.1) family. In terms of tissue distribution, expressed in shoots.

The protein resides in the plastid. The protein localises to the chloroplast membrane. The sequence is that of Protein DETOXIFICATION 44, chloroplastic from Arabidopsis thaliana (Mouse-ear cress).